Consider the following 319-residue polypeptide: MINHGKNIKIFTGNSYPSLAEEIADIIGVQVGDSRVGKFSNGETAVDINETVRGTDLFLIQTLCEPVNDSIMELLIMLDAFKRASAGRITAVIPNYAYARQDRKAKARQPITAKLMADLIHTAGADRVLTMDLHAPQIQGFFDIPVDHLEGVPILAKYFINQNSNTDDLIVVSPDIGGVKRTRKFAEKLHAPIAIIDKRRPKPNVSEVMSIIGDVKGKKAILVDDMIDTAGSIVNAAEALVKMGAKEVSACCTHGVLSGPAIERLENSPLKEVVILNTIPIEGDKRIDKIKVLSVAPIFAEAIRRIYEDMPVSKIFQEE.

ATP is bound by residues 41–43 (NGE) and 100–101 (RQ). Residues histidine 134 and aspartate 175 each contribute to the Mg(2+) site. Lysine 198 is a catalytic residue. D-ribose 5-phosphate is bound by residues arginine 200, aspartate 224, and 228–232 (DTAGS).

The protein belongs to the ribose-phosphate pyrophosphokinase family. Class I subfamily. As to quaternary structure, homohexamer. The cofactor is Mg(2+).

The protein resides in the cytoplasm. It carries out the reaction D-ribose 5-phosphate + ATP = 5-phospho-alpha-D-ribose 1-diphosphate + AMP + H(+). The protein operates within metabolic intermediate biosynthesis; 5-phospho-alpha-D-ribose 1-diphosphate biosynthesis; 5-phospho-alpha-D-ribose 1-diphosphate from D-ribose 5-phosphate (route I): step 1/1. Involved in the biosynthesis of the central metabolite phospho-alpha-D-ribosyl-1-pyrophosphate (PRPP) via the transfer of pyrophosphoryl group from ATP to 1-hydroxyl of ribose-5-phosphate (Rib-5-P). This is Ribose-phosphate pyrophosphokinase from Clostridium acetobutylicum (strain ATCC 824 / DSM 792 / JCM 1419 / IAM 19013 / LMG 5710 / NBRC 13948 / NRRL B-527 / VKM B-1787 / 2291 / W).